The sequence spans 473 residues: MANSFPLRVLPTIDPSAGHTFITPSKRIHESEDVSEFLISKAYVDIMTFLLQLNRAMIPVKLADGTVQSWPINTDAVEFSAPVRQLQQLLTKLEELLAEAPPDTGPRRFGNISFRRWYELVESRASELLGECLPSELLQAKSSDPNSVTAEAELKAYFLGSWGSPQRLDYGTGHELSFLAFLAGIWKLNGFPKTTPGVEERAIVLGVIQPYLELVRTIIKRYTLEPAGSHGVWGLDDHSFIPYILGSAQLAPAISETDPTPEEGSLPGAPSPNGVTKAHIVERERLTNMYFSAIGFIYDVKKGPFWEHSPMLYDISGIQAGWGKINKGMIKMYNAEVLSKFPVVQHFPFGSLFSWDRDPNAVPPPTSAHMSTTQSQSRGPAVPSAGQTPPSGTRAPWATATQAAPPAGAGTAAPWAAKRDGCTPGKPPTSLPDTSRLPPGPMAPTRAPWAASSTGQAPGGDPTHVPTKAPWAK.

The disordered stretch occupies residues 360-473 (NAVPPPTSAH…HVPTKAPWAK (114 aa)). Polar residues predominate over residues 368-378 (AHMSTTQSQSR). Over residues 395–416 (APWATATQAAPPAGAGTAAPWA) the composition is skewed to low complexity.

It belongs to the PTPA-type PPIase family.

The protein resides in the cytoplasm. It localises to the nucleus. The enzyme catalyses [protein]-peptidylproline (omega=180) = [protein]-peptidylproline (omega=0). Functionally, PPIases accelerate the folding of proteins. It catalyzes the cis-trans isomerization of proline imidic peptide bonds in oligopeptides. Acts as a regulatory subunit for PP2A-like phosphatases modulating their activity or substrate specificity, probably by inducing a conformational change in the catalytic subunit, a direct target of the PPIase. Can reactivate inactive phosphatase PP2A-phosphatase methylesterase complexes (PP2Ai) in presence of ATP and Mg(2+) by dissociating the inactive form from the complex. This is Serine/threonine-protein phosphatase 2A activator 1 (rrd1) from Aspergillus fumigatus (strain ATCC MYA-4609 / CBS 101355 / FGSC A1100 / Af293) (Neosartorya fumigata).